The primary structure comprises 463 residues: L-seryl-tRNA(Sec) selenium transferase (463 aa).

N6-(pyridoxal phosphate)lysine is present on Lys295.

This sequence belongs to the SelA family. In terms of assembly, homodecamer; pentamer of dimers. Binds only one seryl-tRNA(Sec) per dimer. It depends on pyridoxal 5'-phosphate as a cofactor.

It is found in the cytoplasm. The enzyme catalyses L-seryl-tRNA(Sec) + selenophosphate + H(+) = L-selenocysteinyl-tRNA(Sec) + phosphate. The protein operates within aminoacyl-tRNA biosynthesis; selenocysteinyl-tRNA(Sec) biosynthesis; selenocysteinyl-tRNA(Sec) from L-seryl-tRNA(Sec) (bacterial route): step 1/1. Functionally, converts seryl-tRNA(Sec) to selenocysteinyl-tRNA(Sec) required for selenoprotein biosynthesis. This chain is L-seryl-tRNA(Sec) selenium transferase, found in Escherichia coli O17:K52:H18 (strain UMN026 / ExPEC).